The primary structure comprises 698 residues: Polyribonucleotide nucleotidyltransferase (698 aa).

Positions 485 and 491 each coordinate Mg(2+). Residues 552–611 enclose the KH domain; that stretch reads PRIHTIKINTDKIRDVIGKGGAVIRSLCEETGTTIEIEDDGTVKIAATSGEQADDAINRI. The region spanning 621–689 is the S1 motif domain; it reads GTIYTGKVVR…RQGRVRLSIK (69 aa).

This sequence belongs to the polyribonucleotide nucleotidyltransferase family. In terms of assembly, component of the RNA degradosome, which is a multiprotein complex involved in RNA processing and mRNA degradation. Requires Mg(2+) as cofactor.

The protein resides in the cytoplasm. The enzyme catalyses RNA(n+1) + phosphate = RNA(n) + a ribonucleoside 5'-diphosphate. In terms of biological role, involved in mRNA degradation. Catalyzes the phosphorolysis of single-stranded polyribonucleotides processively in the 3'- to 5'-direction. The sequence is that of Polyribonucleotide nucleotidyltransferase from Psychromonas ingrahamii (strain DSM 17664 / CCUG 51855 / 37).